Here is a 185-residue protein sequence, read N- to C-terminus: Potassium-transporting ATPase KdpC subunit (185 aa).

A helical transmembrane segment spans residues 14-34; the sequence is ALSLLTGVAYPLALTGIAAVI. The interval 105–128 is disordered; it reads AQNGAPAPVDAVTASGSGLDPHVS.

Belongs to the KdpC family. In terms of assembly, the system is composed of three essential subunits: KdpA, KdpB and KdpC.

The protein localises to the cell inner membrane. In terms of biological role, part of the high-affinity ATP-driven potassium transport (or Kdp) system, which catalyzes the hydrolysis of ATP coupled with the electrogenic transport of potassium into the cytoplasm. This subunit acts as a catalytic chaperone that increases the ATP-binding affinity of the ATP-hydrolyzing subunit KdpB by the formation of a transient KdpB/KdpC/ATP ternary complex. The sequence is that of Potassium-transporting ATPase KdpC subunit from Cereibacter sphaeroides (strain ATCC 17029 / ATH 2.4.9) (Rhodobacter sphaeroides).